The following is a 155-amino-acid chain: 3-hydroxyacyl-[acyl-carrier-protein] dehydratase FabZ (155 aa).

Histidine 57 is an active-site residue.

Belongs to the thioester dehydratase family. FabZ subfamily.

Its subcellular location is the cytoplasm. It catalyses the reaction a (3R)-hydroxyacyl-[ACP] = a (2E)-enoyl-[ACP] + H2O. In terms of biological role, involved in unsaturated fatty acids biosynthesis. Catalyzes the dehydration of short chain beta-hydroxyacyl-ACPs and long chain saturated and unsaturated beta-hydroxyacyl-ACPs. The sequence is that of 3-hydroxyacyl-[acyl-carrier-protein] dehydratase FabZ from Cereibacter sphaeroides (strain ATCC 17025 / ATH 2.4.3) (Rhodobacter sphaeroides).